Reading from the N-terminus, the 136-residue chain is Small ribosomal subunit protein uS8c (136 aa).

This sequence belongs to the universal ribosomal protein uS8 family. Part of the 30S ribosomal subunit.

The protein resides in the plastid. It is found in the chloroplast. One of the primary rRNA binding proteins, it binds directly to 16S rRNA central domain where it helps coordinate assembly of the platform of the 30S subunit. The sequence is that of Small ribosomal subunit protein uS8c (rps8) from Citrus sinensis (Sweet orange).